The following is a 282-amino-acid chain: Pantothenate synthetase (282 aa).

30–37 (MGYLHEGH) provides a ligand contact to ATP. The active-site Proton donor is the His37. Position 61 (Gln61) interacts with (R)-pantoate. Gln61 serves as a coordination point for beta-alanine. ATP is bound at residue 147–150 (GMKD). Gln153 is a binding site for (R)-pantoate. ATP-binding positions include Val176 and 184-187 (KSSR).

This sequence belongs to the pantothenate synthetase family. In terms of assembly, homodimer.

The protein resides in the cytoplasm. The catalysed reaction is (R)-pantoate + beta-alanine + ATP = (R)-pantothenate + AMP + diphosphate + H(+). It functions in the pathway cofactor biosynthesis; (R)-pantothenate biosynthesis; (R)-pantothenate from (R)-pantoate and beta-alanine: step 1/1. In terms of biological role, catalyzes the condensation of pantoate with beta-alanine in an ATP-dependent reaction via a pantoyl-adenylate intermediate. This Bacillus cereus (strain ATCC 14579 / DSM 31 / CCUG 7414 / JCM 2152 / NBRC 15305 / NCIMB 9373 / NCTC 2599 / NRRL B-3711) protein is Pantothenate synthetase.